The chain runs to 329 residues: Ornithine carbamoyltransferase (329 aa).

Residues 51-54, Q78, R102, and 129-132 each bind carbamoyl phosphate; these read STRT and HPVQ. L-ornithine is bound by residues N174, D238, and 242–243; that span reads SM. Carbamoyl phosphate-binding positions include 278 to 279 and R306; that span reads CL.

It belongs to the aspartate/ornithine carbamoyltransferase superfamily. OTCase family.

The protein resides in the cytoplasm. It catalyses the reaction carbamoyl phosphate + L-ornithine = L-citrulline + phosphate + H(+). It participates in amino-acid biosynthesis; L-arginine biosynthesis; L-arginine from L-ornithine and carbamoyl phosphate: step 1/3. Reversibly catalyzes the transfer of the carbamoyl group from carbamoyl phosphate (CP) to the N(epsilon) atom of ornithine (ORN) to produce L-citrulline. This chain is Ornithine carbamoyltransferase, found in Helicobacter hepaticus (strain ATCC 51449 / 3B1).